The primary structure comprises 229 residues: Triosephosphate isomerase (229 aa).

Substrate is bound at residue 9–11 (NLK). H93 acts as the Electrophile in catalysis. Residue E141 is the Proton acceptor of the active site. Substrate-binding positions include I146, G181, and 202-203 (AS).

Belongs to the triosephosphate isomerase family. In terms of assembly, homotetramer; dimer of dimers.

It localises to the cytoplasm. It catalyses the reaction D-glyceraldehyde 3-phosphate = dihydroxyacetone phosphate. It functions in the pathway carbohydrate biosynthesis; gluconeogenesis. Its pathway is carbohydrate degradation; glycolysis; D-glyceraldehyde 3-phosphate from glycerone phosphate: step 1/1. Functionally, involved in the gluconeogenesis. Catalyzes stereospecifically the conversion of dihydroxyacetone phosphate (DHAP) to D-glyceraldehyde-3-phosphate (G3P). This Pyrobaculum islandicum (strain DSM 4184 / JCM 9189 / GEO3) protein is Triosephosphate isomerase.